We begin with the raw amino-acid sequence, 462 residues long: tRNA pseudouridine(32) synthase, mitochondrial (462 aa).

The N-terminal 24 residues, 1-24 (MQRNNRLRNLFTVPVIMARQLKRN), are a transit peptide targeting the mitochondrion. Residues 127–188 (KLVDVFISEF…HEPPVTSRPI (62 aa)) enclose the S4 RNA-binding domain. Residue aspartate 238 is part of the active site.

It belongs to the pseudouridine synthase RluA family.

It localises to the mitochondrion. It carries out the reaction uridine(32) in tRNA = pseudouridine(32) in tRNA. Functionally, responsible for synthesis of pseudouridine from uracil-32 in mitochondrial transfer RNAs. This chain is tRNA pseudouridine(32) synthase, mitochondrial (PUS9), found in Saccharomyces cerevisiae (strain ATCC 204508 / S288c) (Baker's yeast).